The chain runs to 1033 residues: Calcium-transporting ATPase 3, plasma membrane-type (1033 aa).

Over 1-180 (MHSGVNGCCP…FVWEALEDTT (180 aa)) the chain is Cytoplasmic. 2 helical membrane passes run 181 to 201 (LIIL…TEGW) and 204 to 224 (GAHD…VTGT). Over 225–268 (SNYQQSLQFRDLDKEKRKILVQVTRNGLRQRVLIDDLLPGDAVH) the chain is Cytoplasmic. Helical transmembrane passes span 269–289 (LAVG…SVLV) and 362–382 (IGKI…QGII). Residues 383-405 (GQKYLDGLLLSWSGDDVLEILDH) are Cytoplasmic-facing. A helical transmembrane segment spans residues 406 to 426 (FAVAVTIVVVAVPEGLPLAVT). Asp461 (4-aspartylphosphate intermediate) is an active-site residue. Positions 762 and 766 each coordinate Mg(2+). Residues 823–843 (FQLTVNVVALLVNFTSACFTG) form a helical membrane-spanning segment. Residues 844–846 (DAP) lie on the Cytoplasmic side of the membrane. Helical transmembrane passes span 847 to 867 (LTAV…ALAL) and 928 to 948 (IVLN…NEIS). The Cytoplasmic portion of the chain corresponds to 949–965 (SREMEDINVLRGMAGNS). 2 helical membrane-spanning segments follow: residues 966 to 986 (IFLG…QFLG) and 999 to 1019 (WLIS…IKLI). Residues 1020–1033 (AVEPHEKADTRRTP) lie on the Cytoplasmic side of the membrane.

This sequence belongs to the cation transport ATPase (P-type) (TC 3.A.3) family. Type IIB subfamily.

It localises to the membrane. The enzyme catalyses Ca(2+)(in) + ATP + H2O = Ca(2+)(out) + ADP + phosphate + H(+). Activated by calmodulin. This magnesium-dependent enzyme catalyzes the hydrolysis of ATP coupled with the translocation of calcium from the cytosol out of the cell, into the endoplasmic reticulum, or into organelles. The sequence is that of Calcium-transporting ATPase 3, plasma membrane-type from Oryza sativa subsp. japonica (Rice).